The following is a 105-amino-acid chain: Thioredoxin (105 aa).

The 105-residue stretch at 1–105 (MASNVTDKSF…SLIEWINNNI (105 aa)) folds into the Thioredoxin domain. C30 and C33 are oxidised to a cystine.

This sequence belongs to the thioredoxin family.

Functionally, component of the thioredoxin-thioredoxin reductase system. Participates in various redox reactions through the reversible oxidation of its active center dithiol to a disulfide and catalyzes dithiol-disulfide exchange reactions. In Rickettsia bellii (strain RML369-C), this protein is Thioredoxin (trxA).